The following is a 201-amino-acid chain: Riboflavin synthase (201 aa).

Lumazine-binding repeat units lie at residues 1–97 (MFTG…LGGH) and 98–197 (IVQG…ERLM). Residues 4–6 (GIV), 47–49 (CLT), 62–67 (DVMAET), 101–103 (GHV), lysine 136, 145–147 (SLT), and 162–167 (SLIPTT) contribute to the 2,4-dihydroxypteridine site.

In terms of assembly, homotrimer.

It catalyses the reaction 2 6,7-dimethyl-8-(1-D-ribityl)lumazine + H(+) = 5-amino-6-(D-ribitylamino)uracil + riboflavin. It functions in the pathway cofactor biosynthesis; riboflavin biosynthesis; riboflavin from 2-hydroxy-3-oxobutyl phosphate and 5-amino-6-(D-ribitylamino)uracil: step 2/2. Functionally, catalyzes the dismutation of two molecules of 6,7-dimethyl-8-ribityllumazine, resulting in the formation of riboflavin and 5-amino-6-(D-ribitylamino)uracil. The chain is Riboflavin synthase (ribE) from Mycobacterium bovis (strain ATCC BAA-935 / AF2122/97).